We begin with the raw amino-acid sequence, 153 residues long: Lipoprotein signal peptidase (153 aa).

Transmembrane regions (helical) follow at residues 11–31 (ILIL…SLFV), 39–59 (DCID…FAFL), and 68–88 (LVLV…CYAI). Active-site residues include D112 and D129. The chain crosses the membrane as a helical span at residues 122–142 (FAVFNFADVMIDVAVVWILLL).

The protein belongs to the peptidase A8 family.

The protein resides in the cell inner membrane. The catalysed reaction is Release of signal peptides from bacterial membrane prolipoproteins. Hydrolyzes -Xaa-Yaa-Zaa-|-(S,diacylglyceryl)Cys-, in which Xaa is hydrophobic (preferably Leu), and Yaa (Ala or Ser) and Zaa (Gly or Ala) have small, neutral side chains.. It functions in the pathway protein modification; lipoprotein biosynthesis (signal peptide cleavage). This protein specifically catalyzes the removal of signal peptides from prolipoproteins. The sequence is that of Lipoprotein signal peptidase from Sulfurimonas denitrificans (strain ATCC 33889 / DSM 1251) (Thiomicrospira denitrificans (strain ATCC 33889 / DSM 1251)).